We begin with the raw amino-acid sequence, 304 residues long: Coenzyme PQQ synthesis protein B (304 aa).

The protein belongs to the PqqB family.

It functions in the pathway cofactor biosynthesis; pyrroloquinoline quinone biosynthesis. In terms of biological role, may be involved in the transport of PQQ or its precursor to the periplasm. The protein is Coenzyme PQQ synthesis protein B of Gluconobacter oxydans (strain 621H) (Gluconobacter suboxydans).